Consider the following 501-residue polypeptide: Splicing factor ESS-2 homolog (501 aa).

Low complexity-rich tracts occupy residues 1–18 (MSATTRTPATPGTPGTPG) and 105–115 (ISGTGRSTSRR). Disordered stretches follow at residues 1-20 (MSATTRTPATPGTPGTPGSL) and 105-163 (ISGT…GRDT). The segment covering 126–151 (TPVSQAKCSNTPLPNSRATDTPFSTD) has biased composition (polar residues). Positions 152-163 (GSEKSDAEGRDT) are enriched in basic and acidic residues. Residues S409 and S411 each carry the phosphoserine modification. A disordered region spans residues 425 to 471 (RGTPRLRHTPSPMSGRKRKVTPGVVRSTNTPILGEPKPKQQAKISTP).

The protein belongs to the ESS2 family.

It localises to the nucleus. This chain is Splicing factor ESS-2 homolog (Es2), found in Drosophila melanogaster (Fruit fly).